The sequence spans 189 residues: Interferon alpha-A (189 aa).

Positions 1 to 23 (MAPAWSFLLSLLLLSCNAICSLG) are cleaved as a signal peptide. Cystine bridges form between C24–C122 and C52–C162.

The protein belongs to the alpha/beta interferon family.

The protein resides in the secreted. In terms of biological role, produced by macrophages, IFN-alpha have antiviral activities. Interferon stimulates the production of two enzymes: a protein kinase and an oligoadenylate synthetase. The protein is Interferon alpha-A (IFNAA) of Bos taurus (Bovine).